A 217-amino-acid polypeptide reads, in one-letter code: N-(5'-phosphoribosyl)anthranilate isomerase (217 aa).

It belongs to the TrpF family.

It carries out the reaction N-(5-phospho-beta-D-ribosyl)anthranilate = 1-(2-carboxyphenylamino)-1-deoxy-D-ribulose 5-phosphate. The protein operates within amino-acid biosynthesis; L-tryptophan biosynthesis; L-tryptophan from chorismate: step 3/5. This Chlorobium luteolum (strain DSM 273 / BCRC 81028 / 2530) (Pelodictyon luteolum) protein is N-(5'-phosphoribosyl)anthranilate isomerase.